The following is a 252-amino-acid chain: Neurovirulence factor ICP34.5 (252 aa).

The span at 1-15 shows a compositional bias: basic residues; it reads MARRRRRHRGPRRPR. Residues 1-17 are required for nucleolar localization; it reads MARRRRRHRGPRRPRPP. 2 disordered regions span residues 1-129 and 150-179; these read MARR…PFRL and RRAG…PATP. Residues 25 to 36 are compositionally biased toward polar residues; sequence TAQSQVTSTPNS. Residues 46–59 show a composition bias toward pro residues; that stretch reads AAPPPPPAGGPPPS. The segment covering 74–84 has biased composition (acidic residues); sequence ASDDDDDDDWP. 2 stretches are compositionally biased toward pro residues: residues 85–94 and 120–129; these read DSPPPEPAPE and SHPPSRPFRL. Positions 129 to 138 match the Nuclear export signal motif; that stretch reads LPPRLALRLR. Repeat copies occupy residues 162 to 164, 165 to 167, 168 to 170, 171 to 173, 174 to 176, and 177 to 179. Residues 162–179 are 6 X 3 AA tandem repeats of A-T-P; it reads ATPATPATPATPATPATP. Residues 165–179 are compositionally biased toward low complexity; sequence ATPATPATPATPATP. Positions 179–192 are binding to PP1CA; sequence PARVRFSPHVRVRH. Residues 179–192 form an interaction with host PPP1CA region; it reads PARVRFSPHVRVRH. The interval 194–252 is important for interferon resistance; the sequence is VVWASAARLARRGSWARERADRARFRRRVAEAEAVIGPCLGPKARARALARGAGPANSV. Residues 204-222 carry the Bipartite nuclear localization signal motif; that stretch reads RRGSWARERADRARFRRRV. Residues 222 to 237 are interaction with host EIF2S1/EIF-2ALPHA; that stretch reads VAEAEAVIGPCLGPKA.

This sequence belongs to the PPP1R15 family. As to quaternary structure, interacts with host PPP1CA to form a high-molecular-weight complex that dephosphorylates EIF2S1/eIF-2alpha. Interacts with host EIF2S1/eIF-2alpha; this interaction is crucial for the specific dephosphorylation of EIF2S1/eIF-2alpha by PPP1CA. Binds to proliferating cell nuclear antigen (PCNA), which may release host cells from growth arrest and facilitate viral replication. Interacts (via N-terminus) with host C1QBP and PRKCA. Interacts with protein UL31. Interacts with host TBK1. Interacts with host STING/TMEM173; this interaction inhibits the intracellular DNA sensing pathway. Interacts with host BECN1; this interaction modulates host autophagy.

The protein localises to the host cytoplasm. The protein resides in the host nucleus. Its subcellular location is the host nucleolus. It localises to the virion. In terms of biological role, inhibits the establishment of the immune response and of the integrated stress response (ISR) in the infected cell. Plays essential roles in viral nuclear egress to mediate capsid transit across the nuclear membrane. Facilitates nuclear egress cooperatively with host C1QBP and protein kinase C/PKC to induce lamin A/C phosphorylation and subsequent reorganization. In turn, lamina disassembles and nuclear egress occurs. Recruits the serine/threonine protein phosphatase PPP1CA/PP1-alpha to dephosphorylate the translation initiation factor EIF2S1/eIF-2alpha, thereby couteracting the host shutoff of protein synthesis involving double-stranded RNA-dependent protein kinase EIF2AK2/PKR. In turn, controls host IRF3 activation and subsequently inhibits host interferon response. Controls the DNA sensing pathway by interacting with and inhibiting host STING/TMEM173. Also down-modulates the host MHC class II proteins cell surface expression. Acts as a neurovirulence factor that has a profound effect on the growth of the virus in central nervous system tissue, by interacting with host BECN1 and thereby antagonizing the host autophagy response. This Human herpesvirus 1 (strain CVG-2) (HHV-1) protein is Neurovirulence factor ICP34.5 (RL1).